The following is a 392-amino-acid chain: MKIIMCIFGLAALAMAGETDLQKILRESNDQFTAQMFSEVVKANPGQNVVLSAFSVLPPLGQLALASVGESHDELLRALALPNDNVTKDVFADLNRGVRAVKGVDLKMASKIYVAKGLELNDDFAAVSRDVFGSEVQNVDFVKSVEAAGAINKWVEDQTNNRIKNLVDPDALDETTRSVLVNAIYFKGSWKDKFVKERTMDRDFHVSKDKTIKVPTMIGKKDVRYADVPELDAKMIEMSYEGDQASMIIILPNQVDGITALEQKLKDPKALSRAEERLYNTEVEIYLPKFKIETTTDLKEVLSNMNIKKLFTPGAARLENLLKTKESLYVDAAIQKAFIEVNEEGAEAAAANAFGIVPASLILYPEVHIDRPFYFELKIDGIPMFNGKVIEP.

Positions 1 to 16 (MKIIMCIFGLAALAMA) are cleaved as a signal peptide. The N-linked (GlcNAc...) asparagine glycan is linked to Asn-85.

Belongs to the serpin family. As to expression, hemolymph.

It localises to the secreted. It is found in the extracellular space. Its function is as follows. Inhibits elastase. This Manduca sexta (Tobacco hawkmoth) protein is Alaserpin.